The following is a 384-amino-acid chain: Succinyl-diaminopimelate desuccinylase (384 aa).

His-75 lines the Zn(2+) pocket. Asp-77 is an active-site residue. Asp-108 is a binding site for Zn(2+). Glu-142 (proton acceptor) is an active-site residue. Positions 143, 171, and 357 each coordinate Zn(2+).

It belongs to the peptidase M20A family. DapE subfamily. In terms of assembly, homodimer. It depends on Zn(2+) as a cofactor. Requires Co(2+) as cofactor.

It carries out the reaction N-succinyl-(2S,6S)-2,6-diaminopimelate + H2O = (2S,6S)-2,6-diaminopimelate + succinate. The protein operates within amino-acid biosynthesis; L-lysine biosynthesis via DAP pathway; LL-2,6-diaminopimelate from (S)-tetrahydrodipicolinate (succinylase route): step 3/3. Catalyzes the hydrolysis of N-succinyl-L,L-diaminopimelic acid (SDAP), forming succinate and LL-2,6-diaminopimelate (DAP), an intermediate involved in the bacterial biosynthesis of lysine and meso-diaminopimelic acid, an essential component of bacterial cell walls. The sequence is that of Succinyl-diaminopimelate desuccinylase from Shewanella oneidensis (strain ATCC 700550 / JCM 31522 / CIP 106686 / LMG 19005 / NCIMB 14063 / MR-1).